Reading from the N-terminus, the 441-residue chain is Ribulose bisphosphate carboxylase/oxygenase activase, chloroplastic (441 aa).

An ATP-binding site is contributed by 167 to 174 (VWGGKGQG).

This sequence belongs to the RuBisCO activase family.

The protein localises to the plastid. The protein resides in the chloroplast stroma. In terms of biological role, activation of RuBisCO (ribulose-1,5-bisphosphate carboxylase/oxygenase; EC 4.1.1.39) involves the ATP-dependent carboxylation of the epsilon-amino group of lysine leading to a carbamate structure. This Phaseolus vulgaris (Kidney bean) protein is Ribulose bisphosphate carboxylase/oxygenase activase, chloroplastic (RCA1).